Reading from the N-terminus, the 267-residue chain is AMP/ADP-polyphosphate phosphotransferase (267 aa).

It belongs to the polyphosphate kinase 2 (PPK2) family. Class III subfamily. The cofactor is Mn(2+).

The catalysed reaction is [phosphate](n) + ADP = [phosphate](n+1) + AMP. It catalyses the reaction [phosphate](n) + ATP = [phosphate](n+1) + ADP. In terms of biological role, uses inorganic polyphosphate (polyP) as a donor to convert both AMP to ADP and ADP to ATP. Can also use GMP, CMP, UMP, GDP, CDP and UDP. The chain is AMP/ADP-polyphosphate phosphotransferase from Meiothermus ruber (strain ATCC 35948 / DSM 1279 / VKM B-1258 / 21) (Thermus ruber).